A 304-amino-acid polypeptide reads, in one-letter code: Tritrans,polycis-undecaprenyl-diphosphate synthase (geranylgeranyl-diphosphate specific) (304 aa).

D33 is an active-site residue. Residue D33 participates in Mg(2+) binding. Residues 34–37 (GNRR), K46, H50, and 78–80 (STE) contribute to the substrate site. The Proton acceptor role is filled by N81. Substrate-binding positions include F82, R84, R203, and 209-211 (RTS).

The protein belongs to the UPP synthase family. As to quaternary structure, homodimer. Mg(2+) is required as a cofactor.

It carries out the reaction geranylgeranyl diphosphate + 7 isopentenyl diphosphate = tri-trans,hepta-cis-undecaprenyl diphosphate + 7 diphosphate. In terms of biological role, catalyzes the sequential condensation of isopentenyl diphosphate (IPP) with geranylgeranyl diphosphate (GGPP) to yield (2Z,6Z,10Z,14Z,18Z,22Z,26Z,30E,34E,38E)-undecaprenyl diphosphate (tritrans,heptacis-UPP). It is probably the precursor of glycosyl carrier lipids. This is Tritrans,polycis-undecaprenyl-diphosphate synthase (geranylgeranyl-diphosphate specific) from Haloarcula marismortui (strain ATCC 43049 / DSM 3752 / JCM 8966 / VKM B-1809) (Halobacterium marismortui).